A 456-amino-acid polypeptide reads, in one-letter code: tRNA modification GTPase MnmE (456 aa).

(6S)-5-formyl-5,6,7,8-tetrahydrofolate is bound by residues Arg-25, Glu-87, and Arg-126. The 157-residue stretch at Gly-221 to Asn-377 folds into the TrmE-type G domain. Asn-231 is a K(+) binding site. Residues Asn-231–Ser-236, Thr-250–Thr-256, and Asp-275–Gly-278 each bind GTP. Ser-235 is a binding site for Mg(2+). K(+) is bound by residues Thr-250, Leu-252, and Thr-255. Mg(2+) is bound at residue Thr-256. Residue Lys-456 participates in (6S)-5-formyl-5,6,7,8-tetrahydrofolate binding.

This sequence belongs to the TRAFAC class TrmE-Era-EngA-EngB-Septin-like GTPase superfamily. TrmE GTPase family. As to quaternary structure, homodimer. Heterotetramer of two MnmE and two MnmG subunits. K(+) is required as a cofactor.

It localises to the cytoplasm. In terms of biological role, exhibits a very high intrinsic GTPase hydrolysis rate. Involved in the addition of a carboxymethylaminomethyl (cmnm) group at the wobble position (U34) of certain tRNAs, forming tRNA-cmnm(5)s(2)U34. The sequence is that of tRNA modification GTPase MnmE from Synechocystis sp. (strain ATCC 27184 / PCC 6803 / Kazusa).